Consider the following 245-residue polypeptide: 1-(5-phosphoribosyl)-5-[(5-phosphoribosylamino)methylideneamino] imidazole-4-carboxamide isomerase (245 aa).

Catalysis depends on aspartate 7, which acts as the Proton acceptor. The active-site Proton donor is aspartate 129.

This sequence belongs to the HisA/HisF family.

It localises to the cytoplasm. It carries out the reaction 1-(5-phospho-beta-D-ribosyl)-5-[(5-phospho-beta-D-ribosylamino)methylideneamino]imidazole-4-carboxamide = 5-[(5-phospho-1-deoxy-D-ribulos-1-ylimino)methylamino]-1-(5-phospho-beta-D-ribosyl)imidazole-4-carboxamide. It participates in amino-acid biosynthesis; L-histidine biosynthesis; L-histidine from 5-phospho-alpha-D-ribose 1-diphosphate: step 4/9. This is 1-(5-phosphoribosyl)-5-[(5-phosphoribosylamino)methylideneamino] imidazole-4-carboxamide isomerase from Escherichia coli O81 (strain ED1a).